We begin with the raw amino-acid sequence, 489 residues long: Mitochondrial distribution and morphology protein 34 (489 aa).

In terms of domain architecture, SMP-LTD spans 1–205 (MSFNINWDSI…LPSVLYKFSQ (205 aa)).

The protein belongs to the MDM34 family. As to quaternary structure, component of the ER-mitochondria encounter structure (ERMES) or MDM complex, composed of MMM1, MDM10, MDM12 and MDM34.

It localises to the mitochondrion outer membrane. Functionally, component of the ERMES/MDM complex, which serves as a molecular tether to connect the endoplasmic reticulum (ER) and mitochondria. Components of this complex are involved in the control of mitochondrial shape and protein biogenesis, and function in nonvesicular lipid trafficking between the ER and mitochondria. MDM34 is required for the interaction of the ER-resident membrane protein MMM1 and the outer mitochondrial membrane-resident beta-barrel protein MDM10. The chain is Mitochondrial distribution and morphology protein 34 from Komagataella phaffii (strain GS115 / ATCC 20864) (Yeast).